Here is a 224-residue protein sequence, read N- to C-terminus: UPF0758 protein Lm4b_01560 (224 aa).

Residues V102–F224 form the MPN domain. Zn(2+) is bound by residues H173, H175, and D186. Positions H173–D186 match the JAMM motif motif.

This sequence belongs to the UPF0758 family.

This chain is UPF0758 protein Lm4b_01560, found in Listeria monocytogenes serotype 4b (strain CLIP80459).